We begin with the raw amino-acid sequence, 159 residues long: Aspartate carbamoyltransferase regulatory chain (159 aa).

Zn(2+) is bound by residues C113, C118, C143, and C146.

Belongs to the PyrI family. As to quaternary structure, contains catalytic and regulatory chains. It depends on Zn(2+) as a cofactor.

Its function is as follows. Involved in allosteric regulation of aspartate carbamoyltransferase. In Methanococcoides burtonii (strain DSM 6242 / NBRC 107633 / OCM 468 / ACE-M), this protein is Aspartate carbamoyltransferase regulatory chain.